Here is a 346-residue protein sequence, read N- to C-terminus: Heparan sulfate glucosamine 3-O-sulfotransferase 5 (346 aa).

Residues 1 to 12 (MLFKQQVWLRQK) are Cytoplasmic-facing. A helical; Signal-anchor for type II membrane protein membrane pass occupies residues 13 to 32 (LLVLGSLAVGSLLYLVARVG). Topologically, residues 33–346 (SLDRLQPICP…QITGRTLNWP (314 aa)) are lumenal. Asn-75 carries an N-linked (GlcNAc...) asparagine glycan. 100 to 104 (KGGTR) lines the 3'-phosphoadenylyl sulfate pocket. Substrate is bound by residues 122-128 (EIHFFDN) and 155-158 (KSPA). An N-linked (GlcNAc...) asparagine glycan is attached at Asn-173. Residues Arg-183 and Ser-191 each coordinate 3'-phosphoadenylyl sulfate. An N-linked (GlcNAc...) asparagine glycan is attached at Asn-204. 226–227 (YK) contacts substrate. A glycan (N-linked (GlcNAc...) asparagine) is linked at Asn-287. Tyr-293 provides a ligand contact to 3'-phosphoadenylyl sulfate. A disulfide bridge connects residues Cys-294 and Cys-304. 3'-phosphoadenylyl sulfate is bound at residue 309–313 (KGRIH).

The protein belongs to the sulfotransferase 1 family.

The protein resides in the golgi apparatus membrane. It carries out the reaction alpha-D-glucosaminyl-[heparan sulfate](n) + 3'-phosphoadenylyl sulfate = 3-sulfo-alpha-D-glucosaminyl-[heparan sulfate](n) + adenosine 3',5'-bisphosphate + H(+). Its function is as follows. Sulfotransferase that utilizes 3'-phospho-5'-adenylyl sulfate (PAPS) to catalyze the transfer of a sulfo group to position 3 of glucosamine residues in heparan. Catalyzes the rate limiting step in the biosynthesis of heparan sulfate (HSact). This modification is a crucial step in the biosynthesis of anticoagulant heparan sulfate as it completes the structure of the antithrombin pentasaccharide binding site. Also generates GlcUA-GlcNS or IdoUA-GlcNS and IdoUA2S-GlcNH2. The protein is Heparan sulfate glucosamine 3-O-sulfotransferase 5 (Hs3st5) of Mus musculus (Mouse).